The primary structure comprises 448 residues: UDP-N-acetylmuramoylalanine--D-glutamate ligase (448 aa).

Residue 112 to 118 (GSNAKST) participates in ATP binding.

Belongs to the MurCDEF family.

The protein resides in the cytoplasm. It carries out the reaction UDP-N-acetyl-alpha-D-muramoyl-L-alanine + D-glutamate + ATP = UDP-N-acetyl-alpha-D-muramoyl-L-alanyl-D-glutamate + ADP + phosphate + H(+). It functions in the pathway cell wall biogenesis; peptidoglycan biosynthesis. Its function is as follows. Cell wall formation. Catalyzes the addition of glutamate to the nucleotide precursor UDP-N-acetylmuramoyl-L-alanine (UMA). This Acinetobacter baumannii (strain ATCC 17978 / DSM 105126 / CIP 53.77 / LMG 1025 / NCDC KC755 / 5377) protein is UDP-N-acetylmuramoylalanine--D-glutamate ligase.